The primary structure comprises 757 residues: Voltage-gated potassium channel KCNC3 (757 aa).

An important for normal N-type inactivation region spans residues 1 to 78; the sequence is MLSSVCVSSF…CPGLPAAAMG (78 aa). Residues 1–87 form a disordered region; it reads MLSSVCVSSF…GRHGGGGGDS (87 aa). The Cytoplasmic portion of the chain corresponds to 1-290; sequence MLSSVCVSSF…EDPYSSRAAR (290 aa). The span at 21 to 40 shows a compositional bias: pro residues; that stretch reads PAPPPQPPESPPPPPLPPQQ. Residues 41–52 show a composition bias toward low complexity; sequence QQPAQPGPAASP. Residues H157, C163, C184, and C185 each coordinate Zn(2+). Low complexity predominate over residues 210 to 219; that stretch reads AANAANAAGA. The disordered stretch occupies residues 210 to 232; the sequence is AANAANAAGAHDGGLDDEAGAGG. The helical transmembrane segment at 291–309 threads the bilayer; sequence YVAFASLFFILISITTFCL. Residues N320 and N336 are each glycosylated (N-linked (GlcNAc...) asparagine). The chain crosses the membrane as a helical span at residues 351-370; it reads VEGVCVVWFTFEFLMRITFC. Residues 371-379 are Cytoplasmic-facing; the sequence is PDKVEFLKS. The chain crosses the membrane as a helical span at residues 380-398; sequence SLNIIDCVAILPFYLEVGL. The helical; Voltage-sensor transmembrane segment at 412-434 threads the bilayer; the sequence is FLRVVRFVRILRIFKLTRHFVGL. At 435–447 the chain is on the cytoplasmic side; the sequence is RVLGHTLRASTNE. Residues 448 to 469 form a helical membrane-spanning segment; sequence FLLLIIFLALGVLIFATMIYYA. N483 carries N-linked (GlcNAc...) asparagine glycosylation. Residues T503, L504, G505, and Y506 each coordinate K(+). The Selectivity filter signature appears at 503–508; that stretch reads TLGYGD. Residues 518–539 form a helical membrane-spanning segment; sequence LVGALCALAGVLTIAMPVPVIV. At 540 to 757 the chain is on the cytoplasmic side; sequence NNFGMYYSLA…NANAAAWISP (218 aa). The disordered stretch occupies residues 556-613; the sequence is PKKKNKHIPRPPQPGSPNYCKPDPPPPPPPHPHHGSGGISPPPPITPPSMGVTVAGAY. R625 bears the Omega-N-methylarginine mark. A disordered region spans residues 682 to 746; the sequence is QPAMSPEDKS…KPGPPSFLPD (65 aa). S686 and S691 each carry phosphoserine. The segment covering 728-743 has biased composition (pro residues); sequence PPLPPQDWRKPGPPSF.

It belongs to the potassium channel family. C (Shaw) (TC 1.A.1.2) subfamily. Kv3.3/KCNC3 sub-subfamily. Homotetramer. Heterotetramer with KCNC1. Interacts (via C-terminus) with HAX1; this interaction modulates channel gating. Identified in a complex with ACTR3, a subunit of the Arp2/3 complex; this interaction is indirect and depends on the presence of HAX1. In terms of processing, N-glycosylated.

It is found in the cell membrane. Its subcellular location is the presynaptic cell membrane. The protein resides in the perikaryon. The protein localises to the cell projection. It localises to the axon. It is found in the dendrite. Its subcellular location is the dendritic spine membrane. The protein resides in the cytoplasm. The protein localises to the cell cortex. It localises to the cytoskeleton. The enzyme catalyses K(+)(in) = K(+)(out). In terms of biological role, voltage-gated potassium channel that plays an important role in the rapid repolarization of fast-firing brain neurons. The channel opens in response to the voltage difference across the membrane, forming a potassium-selective channel through which potassium ions pass in accordance with their electrochemical gradient. The channel displays rapid activation and inactivation kinetics. It plays a role in the regulation of the frequency, shape and duration of action potentials in Purkinje cells. Required for normal survival of cerebellar neurons, probably via its role in regulating the duration and frequency of action potentials that in turn regulate the activity of voltage-gated Ca(2+) channels and cellular Ca(2+) homeostasis. Required for normal motor function. Plays a role in the reorganization of the cortical actin cytoskeleton and the formation of actin veil structures in neuronal growth cones via its interaction with HAX1 and the Arp2/3 complex. This is Voltage-gated potassium channel KCNC3 (KCNC3) from Homo sapiens (Human).